The chain runs to 134 residues: Probable RNA-binding protein MJ0652 (134 aa).

The CRM domain maps to 11–108 (RKLTGKMKRM…REGWKKYLAK (98 aa)).

This chain is Probable RNA-binding protein MJ0652, found in Methanocaldococcus jannaschii (strain ATCC 43067 / DSM 2661 / JAL-1 / JCM 10045 / NBRC 100440) (Methanococcus jannaschii).